The following is a 182-amino-acid chain: UPF0200 protein Mthe_1012 (182 aa).

G8–S15 provides a ligand contact to ATP.

This sequence belongs to the UPF0200 family.

This Methanothrix thermoacetophila (strain DSM 6194 / JCM 14653 / NBRC 101360 / PT) (Methanosaeta thermophila) protein is UPF0200 protein Mthe_1012.